The primary structure comprises 526 residues: Phosphoenolpyruvate carboxylase (526 aa).

Belongs to the PEPCase type 2 family. In terms of assembly, homotetramer. Requires Mg(2+) as cofactor.

It catalyses the reaction oxaloacetate + phosphate = phosphoenolpyruvate + hydrogencarbonate. Catalyzes the irreversible beta-carboxylation of phosphoenolpyruvate (PEP) to form oxaloacetate (OAA), a four-carbon dicarboxylic acid source for the tricarboxylic acid cycle. The chain is Phosphoenolpyruvate carboxylase from Methanosarcina barkeri (strain Fusaro / DSM 804).